The sequence spans 501 residues: Glucan endo-1,3-beta-glucosidase 3 (501 aa).

The signal sequence occupies residues 1-18 (MAALLLLFLFLFASSALS). N88 and N107 each carry an N-linked (GlcNAc...) asparagine glycan. Residue E116 is the Proton donor of the active site. N-linked (GlcNAc...) asparagine glycans are attached at residues N171 and N253. The active-site Nucleophile is the E263. N-linked (GlcNAc...) asparagine glycosylation is found at N295, N353, and N357. C361 and C424 form a disulfide bridge. N-linked (GlcNAc...) asparagine glycosylation is found at N451, N456, N457, and N466. The GPI-anchor amidated serine moiety is linked to residue S470. A propeptide spans 471-501 (GCIPKYYHHPHASFGDLTLLSLLLIIALVFL) (removed in mature form).

It belongs to the glycosyl hydrolase 17 family. In terms of processing, contains two additional disulfide bonds.

It localises to the cell membrane. The enzyme catalyses Hydrolysis of (1-&gt;3)-beta-D-glucosidic linkages in (1-&gt;3)-beta-D-glucans.. The polypeptide is Glucan endo-1,3-beta-glucosidase 3 (Arabidopsis thaliana (Mouse-ear cress)).